The chain runs to 142 residues: Large ribosomal subunit protein uL11 (142 aa).

Belongs to the universal ribosomal protein uL11 family. As to quaternary structure, part of the ribosomal stalk of the 50S ribosomal subunit. Interacts with L10 and the large rRNA to form the base of the stalk. L10 forms an elongated spine to which L12 dimers bind in a sequential fashion forming a multimeric L10(L12)X complex. Post-translationally, one or more lysine residues are methylated.

Its function is as follows. Forms part of the ribosomal stalk which helps the ribosome interact with GTP-bound translation factors. In Colwellia psychrerythraea (strain 34H / ATCC BAA-681) (Vibrio psychroerythus), this protein is Large ribosomal subunit protein uL11.